Here is a 105-residue protein sequence, read N- to C-terminus: Small ribosomal subunit protein uS10 (105 aa).

This sequence belongs to the universal ribosomal protein uS10 family. As to quaternary structure, part of the 30S ribosomal subunit.

Functionally, involved in the binding of tRNA to the ribosomes. The chain is Small ribosomal subunit protein uS10 from Nitratidesulfovibrio vulgaris (strain DSM 19637 / Miyazaki F) (Desulfovibrio vulgaris).